A 658-amino-acid polypeptide reads, in one-letter code: DNA mismatch repair protein MutL (658 aa).

Basic and acidic residues predominate over residues 114–130 (RQEDSSHATQVKAEDGK). Disordered stretches follow at residues 114–138 (RQED…TAAA) and 353–405 (PMPS…HSLS). The span at 361–372 (ENLFDSASNHPT) shows a compositional bias: polar residues.

This sequence belongs to the DNA mismatch repair MutL/HexB family.

This protein is involved in the repair of mismatches in DNA. It is required for dam-dependent methyl-directed DNA mismatch repair. May act as a 'molecular matchmaker', a protein that promotes the formation of a stable complex between two or more DNA-binding proteins in an ATP-dependent manner without itself being part of a final effector complex. In Neisseria gonorrhoeae (strain NCCP11945), this protein is DNA mismatch repair protein MutL.